We begin with the raw amino-acid sequence, 359 residues long: Protein RecA (359 aa).

Residue 64 to 71 (GHESSGKT) coordinates ATP. Residues 328–359 (NKYPNKDSNDSPKEGSKIKTKVNPAVTQDELI) form a disordered region. The span at 331–344 (PNKDSNDSPKEGSK) shows a compositional bias: basic and acidic residues.

The protein belongs to the RecA family.

The protein localises to the cytoplasm. In terms of biological role, can catalyze the hydrolysis of ATP in the presence of single-stranded DNA, the ATP-dependent uptake of single-stranded DNA by duplex DNA, and the ATP-dependent hybridization of homologous single-stranded DNAs. It interacts with LexA causing its activation and leading to its autocatalytic cleavage. The chain is Protein RecA from Francisella tularensis subsp. novicida (strain U112).